We begin with the raw amino-acid sequence, 1397 residues long: MEEISAAAVKVVPGPERPSPFSQLVYTSNDSYIVHSGDLRKIHKAASRGQVRKLEKMTKRKKTINLNIQDAQKRTALHWACVNGHEEVVTFLVDRKCQLDVLDGEHRTPLMKALQCHQEACANILIDSGADINLVDVYGNTALHYAVYSEILSVVAKLLSHGAVIEVHNKASLTPLLLSITKRSEQIVEFLLIKNANANAVNKYKCTALMLAVCHGSSEIVGMLLQQNVDVFAADICGVTAEHYAVTCGFHHIHEQIMEYIRKLSKNHQNTNPEGTSAGTPDEAAPLAERTPDTAESLVEKTPDEAAPLVERTPDTAESLVEKTPDEAASLVEGTSDKIQCLEKATSGKFEQSAEETPREITSPAKETSEKFTWPAKGRPRKIAWEKKEDTPREIMSPAKETSEKFTWAAKGRPRKIAWEKKETPVKTGCVARVTSNKTKVLEKGRSKMIACPTKESSTKASANDQRFPSESKQEEDEEYSCDSRSLFESSAKIQVCIPESIYQKVMEINREVEEPPKKPSAFKPAIEMQNSVPNKAFELKNEQTLRADPMFPPESKQKDYEENSWDSESLCETVSQKDVCLPKATHQKEIDKINGKLEESPNKDGLLKATCGMKVSIPTKALELKDMQTFKAEPPGKPSAFEPATEMQKSVPNKALELKNEQTLRADEILPSESKQKDYEENSWDTESLCETVSQKDVCLPKAAHQKEIDKINGKLEGSPVKDGLLKANCGMKVSIPTKALELMDMQTFKAEPPEKPSAFEPAIEMQKSVPNKALELKNEQTLRADEILPSESKQKDYEESSWDSESLCETVSQKDVCLPKATHQKEIDKINGKLEESPDNDGFLKAPCRMKVSIPTKALELMDMQTFKAEPPEKPSAFEPAIEMQKSVPNKALELKNEQTLRADQMFPSESKQKKVEENSWDSESLRETVSQKDVCVPKATHQKEMDKISGKLEDSTSLSKILDTVHSCERARELQKDHCEQRTGKMEQMKKKFCVLKKKLSEAKEIKSQLENQKVKWEQELCSVRLTLNQEEEKRRNADILNEKIREELGRIEEQHRKELEVKQQLEQALRIQDIELKSVESNLNQVSHTHENENYLLHENCMLKKEIAMLKLEIATLKHQYQEKENKYFEDIKILKEKNAELQMTLKLKEESLTKRASQYSGQLKVLIAENTMLTSKLKEKQDKEILEAEIESHHPRLASAVQDHDQIVTSRKSQEPAFHIAGDACLQRKMNVDVSSTIYNNEVLHQPLSEAQRKSKSLKINLNYAGDALRENTLVSEHAQRDQRETQCQMKEAEHMYQNEQDNVNKHTEQQESLDQKLFQLQSKNMWLQQQLVHAHKKADNKSKITIDIHFLERKMQHHLLKEKNEEIFNYNNHLKNRIYQYEKEKAETENS.

ANK repeat units lie at residues 72-101 (QKRT…QLDV), 105-134 (EHRT…DINL), 138-167 (YGNT…VIEV), 171-200 (ASLT…NANA), 204-233 (YKCT…DVFA), and 237-271 (CGVT…HQNT). A compositionally biased stretch (polar residues) spans 267 to 279 (NHQNTNPEGTSAG). Disordered regions lie at residues 267–376 (NHQN…TWPA), 453–482 (PTKE…EYSC), 782–807 (QTLR…WDSE), and 902–931 (TLRA…LRET). Composition is skewed to basic and acidic residues over residues 290–304 (RTPD…KTPD) and 312–326 (RTPD…KTPD). Residues 455–467 (KESSTKASANDQR) show a composition bias toward polar residues. Composition is skewed to basic and acidic residues over residues 782–800 (QTLR…KDYE) and 913–931 (SKQK…LRET). Coiled-coil stretches lie at residues 998 to 1188 (VLKK…KQDK) and 1282 to 1327 (EHAQ…FQLQ).

In terms of tissue distribution, mainly expressed in breast and testis. A very faint signal is detected in placenta. Also expressed in many breast cancer cells.

This is Ankyrin repeat domain-containing protein 30A (ANKRD30A) from Homo sapiens (Human).